We begin with the raw amino-acid sequence, 261 residues long: Cytochrome c oxidase subunit 3 (261 aa).

The Mitochondrial matrix segment spans residues 1-15; that stretch reads MTHQLHQYHLVDPSP. A helical transmembrane segment spans residues 16 to 34; that stretch reads WPLTGAMGSLLLASGLAVW. The Mitochondrial intermembrane portion of the chain corresponds to 35 to 40; that stretch reads FHTNNT. The chain crosses the membrane as a helical span at residues 41–66; the sequence is MLLKFGLLTLLLTMFQWWRDIIREST. Residues 67 to 72 are Mitochondrial matrix-facing; it reads YQGHHT. A helical transmembrane segment spans residues 73-105; it reads SGVQKNMRYGMILFITSEVFFFLGFFWALYHVS. The Mitochondrial intermembrane segment spans residues 106-128; the sequence is LVPTPELGAEWPPIGITPLNPME. A helical transmembrane segment spans residues 129–152; sequence VPLLNTAVLLSSGATITWSHHTMM. Over 153 to 155 the chain is Mitochondrial matrix; sequence KGN. Residues 156–183 traverse the membrane as a helical segment; it reads KKEATHALMLTIILGAYFTALQLSEYME. The Mitochondrial intermembrane portion of the chain corresponds to 184–190; that stretch reads TPFTIAD. A helical membrane pass occupies residues 191–223; it reads SVYGSLFFVATGFHGLHVMIGTSFLMVCALRLA. At 224–232 the chain is on the mitochondrial matrix side; sequence KHHFTITHH. A helical transmembrane segment spans residues 233 to 256; the sequence is FGYEAAIWYWHFVDIVWLFLYISV. Topologically, residues 257–261 are mitochondrial intermembrane; it reads YWWGS.

The protein belongs to the cytochrome c oxidase subunit 3 family. In terms of assembly, component of the cytochrome c oxidase (complex IV, CIV), a multisubunit enzyme composed of 14 subunits. The complex is composed of a catalytic core of 3 subunits MT-CO1, MT-CO2 and MT-CO3, encoded in the mitochondrial DNA, and 11 supernumerary subunits COX4I, COX5A, COX5B, COX6A, COX6B, COX6C, COX7A, COX7B, COX7C, COX8 and NDUFA4, which are encoded in the nuclear genome. The complex exists as a monomer or a dimer and forms supercomplexes (SCs) in the inner mitochondrial membrane with NADH-ubiquinone oxidoreductase (complex I, CI) and ubiquinol-cytochrome c oxidoreductase (cytochrome b-c1 complex, complex III, CIII), resulting in different assemblies (supercomplex SCI(1)III(2)IV(1) and megacomplex MCI(2)III(2)IV(2)).

Its subcellular location is the mitochondrion inner membrane. The catalysed reaction is 4 Fe(II)-[cytochrome c] + O2 + 8 H(+)(in) = 4 Fe(III)-[cytochrome c] + 2 H2O + 4 H(+)(out). In terms of biological role, component of the cytochrome c oxidase, the last enzyme in the mitochondrial electron transport chain which drives oxidative phosphorylation. The respiratory chain contains 3 multisubunit complexes succinate dehydrogenase (complex II, CII), ubiquinol-cytochrome c oxidoreductase (cytochrome b-c1 complex, complex III, CIII) and cytochrome c oxidase (complex IV, CIV), that cooperate to transfer electrons derived from NADH and succinate to molecular oxygen, creating an electrochemical gradient over the inner membrane that drives transmembrane transport and the ATP synthase. Cytochrome c oxidase is the component of the respiratory chain that catalyzes the reduction of oxygen to water. Electrons originating from reduced cytochrome c in the intermembrane space (IMS) are transferred via the dinuclear copper A center (CU(A)) of subunit 2 and heme A of subunit 1 to the active site in subunit 1, a binuclear center (BNC) formed by heme A3 and copper B (CU(B)). The BNC reduces molecular oxygen to 2 water molecules using 4 electrons from cytochrome c in the IMS and 4 protons from the mitochondrial matrix. The sequence is that of Cytochrome c oxidase subunit 3 (MT-CO3) from Lycodon semicarinatus (Ryukyu odd-tooth snake).